We begin with the raw amino-acid sequence, 341 residues long: L-threonine 3-dehydrogenase (341 aa).

C38 contacts Zn(2+). Active-site charge relay system residues include T40 and H43. Zn(2+) is bound by residues H63, E64, C93, C96, C99, and C107. Residues I175, D195, R200, 262-264 (LGI), and 286-287 (IY) contribute to the NAD(+) site.

Belongs to the zinc-containing alcohol dehydrogenase family. Homotetramer. It depends on Zn(2+) as a cofactor.

The protein localises to the cytoplasm. The catalysed reaction is L-threonine + NAD(+) = (2S)-2-amino-3-oxobutanoate + NADH + H(+). It functions in the pathway amino-acid degradation; L-threonine degradation via oxydo-reductase pathway; glycine from L-threonine: step 1/2. Its function is as follows. Catalyzes the NAD(+)-dependent oxidation of L-threonine to 2-amino-3-ketobutyrate. This Serratia proteamaculans (strain 568) protein is L-threonine 3-dehydrogenase.